The sequence spans 173 residues: Co-chaperone protein HscB homolog (173 aa).

Residues 5–77 enclose the J domain; the sequence is CHYALFDLQP…PRRARYLLAI (73 aa).

It belongs to the HscB family. Interacts with HscA and stimulates its ATPase activity.

In terms of biological role, co-chaperone involved in the maturation of iron-sulfur cluster-containing proteins. Seems to help targeting proteins to be folded toward HscA. This Pseudomonas putida (strain ATCC 700007 / DSM 6899 / JCM 31910 / BCRC 17059 / LMG 24140 / F1) protein is Co-chaperone protein HscB homolog.